The chain runs to 147 residues: MVHLTGEEKAAVTGLWGKVNVEEVGGEALGRLLVVYPWTQRFFDSFGDLSNAGAVMGNAKVKAHGKKVLNSFGEGLKNLDNLKGTFAKLSELHCDKLHVDPENFRLLGNVLVVVLARHFGKDFTPPVQAAFQKLAQGVATALAHKYH.

Valine 2 is modified (N-acetylvaline). A Globin domain is found at 3 to 147 (HLTGEEKAAV…VATALAHKYH (145 aa)). An N6-succinyllysine modification is found at lysine 18. Position 45 is a phosphoserine (serine 45). Residue lysine 60 is modified to N6-succinyllysine. Residues histidine 64 and histidine 93 each contribute to the heme b site. The residue at position 105 (arginine 105) is an Asymmetric dimethylarginine. Position 124 is a phosphothreonine (threonine 124).

This sequence belongs to the globin family. In terms of assembly, hb1 is a heterotetramer of two alpha chains and two beta-1 chains. As to expression, red blood cells.

In terms of biological role, involved in oxygen transport from the lung to the various peripheral tissues. The sequence is that of Hemoglobin subunit beta-1 (HBB1) from Chalinolobus morio (Chocolate-wattled bat).